The sequence spans 471 residues: Glutamate--tRNA ligase (471 aa).

A 'HIGH' region motif is present at residues 9 to 19 (PSPTGYLHVGG). Residues Cys-98, Cys-100, Cys-125, and Asp-127 each contribute to the Zn(2+) site. The 'KMSKS' region motif lies at 237–241 (KLSKR). Position 240 (Lys-240) interacts with ATP.

This sequence belongs to the class-I aminoacyl-tRNA synthetase family. Glutamate--tRNA ligase type 1 subfamily. In terms of assembly, monomer. Zn(2+) is required as a cofactor.

Its subcellular location is the cytoplasm. It carries out the reaction tRNA(Glu) + L-glutamate + ATP = L-glutamyl-tRNA(Glu) + AMP + diphosphate. Catalyzes the attachment of glutamate to tRNA(Glu) in a two-step reaction: glutamate is first activated by ATP to form Glu-AMP and then transferred to the acceptor end of tRNA(Glu). The sequence is that of Glutamate--tRNA ligase from Yersinia pseudotuberculosis serotype O:1b (strain IP 31758).